The chain runs to 512 residues: uncharacterized protein (512 aa).

An N-terminal signal peptide occupies residues 1–22 (MVSSLIYSLCAVSGLLATTVNG). N-linked (GlcNAc...) asparagine glycosylation occurs at Asn167. Residues 251–282 (SAASPPIYEPDRQTDPEDPETGRNNNQGFEGL) are disordered.

The protein resides in the secreted. This is an uncharacterized protein from Arthroderma benhamiae (strain ATCC MYA-4681 / CBS 112371) (Trichophyton mentagrophytes).